We begin with the raw amino-acid sequence, 119 residues long: Large ribosomal subunit protein bL17 (119 aa).

The protein belongs to the bacterial ribosomal protein bL17 family. As to quaternary structure, part of the 50S ribosomal subunit. Contacts protein L32.

The protein is Large ribosomal subunit protein bL17 of Psychrobacter sp. (strain PRwf-1).